The following is a 22-amino-acid chain: Cysteine-rich venom protein notescatin (22 aa).

Residues 1-15 (SNKKDYQKEIVDKHN) are compositionally biased toward basic and acidic residues. The tract at residues 1–22 (SNKKDYQKEIVDKHNALRRSVK) is disordered.

It belongs to the CRISP family. In terms of processing, contains 8 disulfide bonds. Expressed by the venom gland.

It localises to the secreted. The chain is Cysteine-rich venom protein notescatin from Notechis scutatus scutatus (Mainland tiger snake).